The following is a 269-amino-acid chain: Endo-1,3-1,4-beta-glycanase ExoK (269 aa).

An N-terminal signal peptide occupies residues 1 to 29 (MTIDRYRRFARLAFIATLPLAGLATAAAA). The GH16 domain maps to 40–252 (DDFDTLDTRV…RVAFTAAGDE (213 aa)). The Nucleophile role is filled by Glu-138. Glu-142 acts as the Proton donor in catalysis.

It belongs to the glycosyl hydrolase 16 family.

The protein localises to the secreted. Its pathway is glycan metabolism; exopolysaccharide biosynthesis. Cleaves high molecular weight succinoglycan to yield LMW succinoglycan. Dynamically regulates the molecular weight distribution of succinoglycan by cleaving nascent succinoglycan only during a limited period after its synthesis, perhaps before it undergoes a time-dependent change in its conformation or aggregation state. The protein is Endo-1,3-1,4-beta-glycanase ExoK (exoK) of Rhizobium meliloti (strain 1021) (Ensifer meliloti).